The chain runs to 240 residues: Protein GrpE (240 aa).

Polar residues predominate over residues 1–13 (MTDNQRQSTTDGQ). Positions 1 to 89 (MTDNQRQSTT…DAEQKAEEHW (89 aa)) are disordered. Residues 20 to 38 (AQATAEAAEQTQATQASAA) show a composition bias toward low complexity. Positions 65 to 89 (EALRQRVEELEKALADAEQKAEEHW) are enriched in basic and acidic residues.

Belongs to the GrpE family. As to quaternary structure, homodimer.

The protein resides in the cytoplasm. Participates actively in the response to hyperosmotic and heat shock by preventing the aggregation of stress-denatured proteins, in association with DnaK and GrpE. It is the nucleotide exchange factor for DnaK and may function as a thermosensor. Unfolded proteins bind initially to DnaJ; upon interaction with the DnaJ-bound protein, DnaK hydrolyzes its bound ATP, resulting in the formation of a stable complex. GrpE releases ADP from DnaK; ATP binding to DnaK triggers the release of the substrate protein, thus completing the reaction cycle. Several rounds of ATP-dependent interactions between DnaJ, DnaK and GrpE are required for fully efficient folding. The protein is Protein GrpE of Halorhodospira halophila (strain DSM 244 / SL1) (Ectothiorhodospira halophila (strain DSM 244 / SL1)).